The chain runs to 543 residues: MSSTPAQDLARAVIDSLAPHVTDVVLCPGSRNSPLSLELLARQDLRVHVRIDERSASFLALSLARTQARPVAVVMTSGTAVANCLPAVAEAAHAHIPLIVLSADRPAHLVGTGASQTINQTGIFGDLAPTVGITELDQVAQIAESLAQRASQIPRHFNLALDVPLVAPELPELHGEAVGASWTHRWINHGEVTVDLGEHTLVIAGDEAWEVEGLEDVPTIAEPTAPKPYNPVHPLAAEILLKEQVSAEGYVVNTRPDHVIVVGHPTLHRGVLKLMSDPEIKLTVLSRTDIITDPGRHADQVGSTVKVTGTQEKQWLKICSAASELSADGVRDVLDNQEFGFTGLHVAAAVADTLGTGDTLFATASNPIRDLSLVGMPFDGVDTFSPRGVAGIDGSVAQAIGTALAVQSRHPDEIRAPRTVALLGDLSFLHDIGGLLIGPDEPRPENLTIVVANDNGGGIFELLETGADGLRPNFERAFGTPHDASIADLCAGYGIEHQAVDNLQDLIIALVDTTEVSGFTVIEASTVRDTRRAQQQALMTKVR.

The protein belongs to the TPP enzyme family. MenD subfamily. In terms of assembly, homodimer. Mg(2+) is required as a cofactor. Requires Mn(2+) as cofactor. It depends on thiamine diphosphate as a cofactor.

The catalysed reaction is isochorismate + 2-oxoglutarate + H(+) = 5-enolpyruvoyl-6-hydroxy-2-succinyl-cyclohex-3-ene-1-carboxylate + CO2. The protein operates within quinol/quinone metabolism; 1,4-dihydroxy-2-naphthoate biosynthesis; 1,4-dihydroxy-2-naphthoate from chorismate: step 2/7. It functions in the pathway quinol/quinone metabolism; menaquinone biosynthesis. In terms of biological role, catalyzes the thiamine diphosphate-dependent decarboxylation of 2-oxoglutarate and the subsequent addition of the resulting succinic semialdehyde-thiamine pyrophosphate anion to isochorismate to yield 2-succinyl-5-enolpyruvyl-6-hydroxy-3-cyclohexene-1-carboxylate (SEPHCHC). This is 2-succinyl-5-enolpyruvyl-6-hydroxy-3-cyclohexene-1-carboxylate synthase from Corynebacterium glutamicum (strain R).